Consider the following 486-residue polypeptide: Siroheme synthase (486 aa).

Residues 1-204 (MNYLPIFVDL…HQIEQAEALV (204 aa)) are precorrin-2 dehydrogenase /sirohydrochlorin ferrochelatase. NAD(+) contacts are provided by residues 22–23 (HV) and 43–44 (EK). Residue Ser128 is modified to Phosphoserine. Residues 216-486 (GEVSLVGAGP…NKETHWKQAA (271 aa)) are uroporphyrinogen-III C-methyltransferase. S-adenosyl-L-methionine is bound at residue Pro225. The active-site Proton acceptor is Asp248. Catalysis depends on Lys270, which acts as the Proton donor. Residues 301–303 (GGD), Val306, 331–332 (TA), Met383, and Gly412 each bind S-adenosyl-L-methionine.

In the N-terminal section; belongs to the precorrin-2 dehydrogenase / sirohydrochlorin ferrochelatase family. This sequence in the C-terminal section; belongs to the precorrin methyltransferase family.

The enzyme catalyses uroporphyrinogen III + 2 S-adenosyl-L-methionine = precorrin-2 + 2 S-adenosyl-L-homocysteine + H(+). It carries out the reaction precorrin-2 + NAD(+) = sirohydrochlorin + NADH + 2 H(+). The catalysed reaction is siroheme + 2 H(+) = sirohydrochlorin + Fe(2+). It functions in the pathway cofactor biosynthesis; adenosylcobalamin biosynthesis; precorrin-2 from uroporphyrinogen III: step 1/1. The protein operates within cofactor biosynthesis; adenosylcobalamin biosynthesis; sirohydrochlorin from precorrin-2: step 1/1. Its pathway is porphyrin-containing compound metabolism; siroheme biosynthesis; precorrin-2 from uroporphyrinogen III: step 1/1. It participates in porphyrin-containing compound metabolism; siroheme biosynthesis; siroheme from sirohydrochlorin: step 1/1. It functions in the pathway porphyrin-containing compound metabolism; siroheme biosynthesis; sirohydrochlorin from precorrin-2: step 1/1. Multifunctional enzyme that catalyzes the SAM-dependent methylations of uroporphyrinogen III at position C-2 and C-7 to form precorrin-2 via precorrin-1. Then it catalyzes the NAD-dependent ring dehydrogenation of precorrin-2 to yield sirohydrochlorin. Finally, it catalyzes the ferrochelation of sirohydrochlorin to yield siroheme. The chain is Siroheme synthase from Actinobacillus pleuropneumoniae serotype 7 (strain AP76).